The following is a 107-amino-acid chain: Anti-adapter protein IraM (107 aa).

This sequence belongs to the IraM/RssC family.

The protein resides in the cytoplasm. In terms of biological role, inhibits RpoS proteolysis by regulating RssB activity, thereby increasing the stability of the sigma stress factor RpoS during magnesium starvation. The chain is Anti-adapter protein IraM from Shigella dysenteriae serotype 1 (strain Sd197).